We begin with the raw amino-acid sequence, 185 residues long: Elongation factor P (185 aa).

This sequence belongs to the elongation factor P family.

It localises to the cytoplasm. It participates in protein biosynthesis; polypeptide chain elongation. Its function is as follows. Involved in peptide bond synthesis. Stimulates efficient translation and peptide-bond synthesis on native or reconstituted 70S ribosomes in vitro. Probably functions indirectly by altering the affinity of the ribosome for aminoacyl-tRNA, thus increasing their reactivity as acceptors for peptidyl transferase. The polypeptide is Elongation factor P (Caldicellulosiruptor bescii (strain ATCC BAA-1888 / DSM 6725 / KCTC 15123 / Z-1320) (Anaerocellum thermophilum)).